We begin with the raw amino-acid sequence, 227 residues long: Cytochrome c oxidase subunit 2 (227 aa).

Topologically, residues 1 to 14 are mitochondrial intermembrane; sequence MAYPFQLGFQDATS. A helical transmembrane segment spans residues 15-45; that stretch reads PIMEELLHFHDHTLMIVFLISSLVLYIITLM. Topologically, residues 46–59 are mitochondrial matrix; it reads LTTKLTHTSTMDAQ. The helical transmembrane segment at 60–87 threads the bilayer; it reads EVETVWTILPAIILILIALPSLRILYMM. Topologically, residues 88–227 are mitochondrial intermembrane; it reads DEVNNPSLTV…FFEKWSASML (140 aa). The Cu cation site is built by His-161, Cys-196, Glu-198, Cys-200, His-204, and Met-207. A Mg(2+)-binding site is contributed by Glu-198.

It belongs to the cytochrome c oxidase subunit 2 family. Component of the cytochrome c oxidase (complex IV, CIV), a multisubunit enzyme composed of 14 subunits. The complex is composed of a catalytic core of 3 subunits MT-CO1, MT-CO2 and MT-CO3, encoded in the mitochondrial DNA, and 11 supernumerary subunits COX4I, COX5A, COX5B, COX6A, COX6B, COX6C, COX7A, COX7B, COX7C, COX8 and NDUFA4, which are encoded in the nuclear genome. The complex exists as a monomer or a dimer and forms supercomplexes (SCs) in the inner mitochondrial membrane with NADH-ubiquinone oxidoreductase (complex I, CI) and ubiquinol-cytochrome c oxidoreductase (cytochrome b-c1 complex, complex III, CIII), resulting in different assemblies (supercomplex SCI(1)III(2)IV(1) and megacomplex MCI(2)III(2)IV(2)). Found in a complex with TMEM177, COA6, COX18, COX20, SCO1 and SCO2. Interacts with TMEM177 in a COX20-dependent manner. Interacts with COX20. Interacts with COX16. It depends on Cu cation as a cofactor.

It localises to the mitochondrion inner membrane. The catalysed reaction is 4 Fe(II)-[cytochrome c] + O2 + 8 H(+)(in) = 4 Fe(III)-[cytochrome c] + 2 H2O + 4 H(+)(out). Component of the cytochrome c oxidase, the last enzyme in the mitochondrial electron transport chain which drives oxidative phosphorylation. The respiratory chain contains 3 multisubunit complexes succinate dehydrogenase (complex II, CII), ubiquinol-cytochrome c oxidoreductase (cytochrome b-c1 complex, complex III, CIII) and cytochrome c oxidase (complex IV, CIV), that cooperate to transfer electrons derived from NADH and succinate to molecular oxygen, creating an electrochemical gradient over the inner membrane that drives transmembrane transport and the ATP synthase. Cytochrome c oxidase is the component of the respiratory chain that catalyzes the reduction of oxygen to water. Electrons originating from reduced cytochrome c in the intermembrane space (IMS) are transferred via the dinuclear copper A center (CU(A)) of subunit 2 and heme A of subunit 1 to the active site in subunit 1, a binuclear center (BNC) formed by heme A3 and copper B (CU(B)). The BNC reduces molecular oxygen to 2 water molecules using 4 electrons from cytochrome c in the IMS and 4 protons from the mitochondrial matrix. The chain is Cytochrome c oxidase subunit 2 (MT-CO2) from Balaenoptera musculus (Blue whale).